The sequence spans 342 residues: uncharacterized protein (342 aa).

Zn(2+)-binding residues include Cys41, His63, Cys94, Cys97, Cys100, Cys108, and Glu149.

This sequence belongs to the zinc-containing alcohol dehydrogenase family. The cofactor is Zn(2+).

This is an uncharacterized protein from Haemophilus influenzae (strain ATCC 51907 / DSM 11121 / KW20 / Rd).